The following is a 101-amino-acid chain: MAPATRSLLRAPLLLLLLLLATSRLATGAPVANELRCQCLQTMTGVHLKNIQSLKVTPPGPHCTQTEVIATLKNGQEACLNPEAPMVQKIVQKMLKSGIRK.

The N-terminal stretch at 1–28 is a signal peptide; sequence MAPATRSLLRAPLLLLLLLLATSRLATG. 2 cysteine pairs are disulfide-bonded: Cys37/Cys63 and Cys39/Cys79.

It belongs to the intercrine alpha (chemokine CxC) family.

The protein resides in the secreted. Its function is as follows. Has chemotactic activity for neutrophils. This Cricetulus griseus (Chinese hamster) protein is Growth-regulated alpha protein (CXCL1).